Reading from the N-terminus, the 185-residue chain is MLTQIKQDAQTRMTKSIDALRHSLTTIRTGRASPALLDGIKVKAYGADTPLNQVASISVSEGRSLVISLFDKGMIKDVEKAIYASDLGLTPTVVGTVIRLNLPPLTEERRKELSKSVHGEGEDSKVAIRNIRRDANQQVKDLLKDKAVTEDEARSAEDDIQKLTDKAIKDVDEVVKGKEQELMTV.

The protein belongs to the RRF family.

The protein localises to the cytoplasm. In terms of biological role, responsible for the release of ribosomes from messenger RNA at the termination of protein biosynthesis. May increase the efficiency of translation by recycling ribosomes from one round of translation to another. In Xanthomonas euvesicatoria pv. vesicatoria (strain 85-10) (Xanthomonas campestris pv. vesicatoria), this protein is Ribosome-recycling factor.